The primary structure comprises 425 residues: RNA polymerase II-associated factor 1 homolog (425 aa).

Residues 152 to 174 are a coiled coil; sequence KKNQQVEDMYRDKQSQIDAINKT. A disordered region spans residues 331-425; that stretch reads SRKSKLTLTY…KEPTVDSDSD (95 aa). Basic and acidic residues-rich tracts occupy residues 344 to 380 and 393 to 402; these read SELE…KEEG and DKPQKSRSDS.

Belongs to the PAF1 family. In terms of assembly, component of the PAF1 complex which consists of at least cdc-73, ctr-9, leo-1, pafo-1 and rtfo-1.

The protein localises to the nucleus. Its function is as follows. Component of the PAF1 complex which is a multifunctional complex involved in transcription initiation via genetic interactions with TATA-binding proteins, elongation and transcription-coupled histone modification. This chain is RNA polymerase II-associated factor 1 homolog, found in Caenorhabditis elegans.